Here is a 92-residue protein sequence, read N- to C-terminus: PqqA binding protein (92 aa).

The protein belongs to the PqqD family. As to quaternary structure, monomer. Interacts with PqqE.

The protein operates within cofactor biosynthesis; pyrroloquinoline quinone biosynthesis. In terms of biological role, functions as a PqqA binding protein and presents PqqA to PqqE, in the pyrroloquinoline quinone (PQQ) biosynthetic pathway. This is PqqA binding protein from Xanthomonas oryzae pv. oryzae (strain MAFF 311018).